A 548-amino-acid polypeptide reads, in one-letter code: Adenine deaminase (548 aa).

The protein belongs to the metallo-dependent hydrolases superfamily. Adenine deaminase family. Mn(2+) serves as cofactor.

The catalysed reaction is adenine + H2O + H(+) = hypoxanthine + NH4(+). The sequence is that of Adenine deaminase from Borreliella afzelii (strain PKo) (Borrelia afzelii).